A 455-amino-acid polypeptide reads, in one-letter code: Squamosa promoter-binding-like protein 16 (455 aa).

Residues 115–192 (CPSCAVDGCK…DGHNRRRRKP (78 aa)) form an SBP-type zinc finger. Zn(2+)-binding residues include Cys118, Cys123, Cys140, His143, Cys159, Cys162, His166, and Cys178. The Bipartite nuclear localization signal motif lies at 175–191 (KRSCRKRLDGHNRRRRK). Residues 182–204 (LDGHNRRRRKPQPDPMNSASYLA) are disordered.

As to expression, expressed in young panicles.

Its subcellular location is the nucleus. Its function is as follows. Trans-acting factor that binds specifically to the consensus nucleotide sequence 5'-TNCGTACAA-3'. May be involved in panicle development. This is Squamosa promoter-binding-like protein 16 (SPL16) from Oryza sativa subsp. japonica (Rice).